Reading from the N-terminus, the 299-residue chain is ATP phosphoribosyltransferase (299 aa).

This sequence belongs to the ATP phosphoribosyltransferase family. Long subfamily. Requires Mg(2+) as cofactor.

The protein localises to the cytoplasm. The catalysed reaction is 1-(5-phospho-beta-D-ribosyl)-ATP + diphosphate = 5-phospho-alpha-D-ribose 1-diphosphate + ATP. It functions in the pathway amino-acid biosynthesis; L-histidine biosynthesis; L-histidine from 5-phospho-alpha-D-ribose 1-diphosphate: step 1/9. With respect to regulation, feedback inhibited by histidine. Catalyzes the condensation of ATP and 5-phosphoribose 1-diphosphate to form N'-(5'-phosphoribosyl)-ATP (PR-ATP). Has a crucial role in the pathway because the rate of histidine biosynthesis seems to be controlled primarily by regulation of HisG enzymatic activity. This is ATP phosphoribosyltransferase from Shewanella baltica (strain OS155 / ATCC BAA-1091).